The primary structure comprises 143 residues: Peptide methionine sulfoxide reductase MsrB (143 aa).

One can recognise a MsrB domain in the interval 16–139 (DAELRRRLTP…NSAALNFEAK (124 aa)). Zn(2+)-binding residues include cysteine 55, cysteine 58, cysteine 104, and cysteine 107. Cysteine 128 acts as the Nucleophile in catalysis.

It belongs to the MsrB Met sulfoxide reductase family. The cofactor is Zn(2+).

It carries out the reaction L-methionyl-[protein] + [thioredoxin]-disulfide + H2O = L-methionyl-(R)-S-oxide-[protein] + [thioredoxin]-dithiol. In Burkholderia mallei (strain NCTC 10229), this protein is Peptide methionine sulfoxide reductase MsrB.